Reading from the N-terminus, the 352-residue chain is Probable dual-specificity RNA methyltransferase RlmN (352 aa).

Residue E99 is the Proton acceptor of the active site. The 221-residue stretch at 105-325 (EGDRATLCIS…ESHGYTCTIR (221 aa)) folds into the Radical SAM core domain. An intrachain disulfide couples C112 to C336. Positions 119, 123, and 126 each coordinate [4Fe-4S] cluster. S-adenosyl-L-methionine-binding positions include 164 to 165 (GE), S196, 217 to 219 (SLH), and H293. The active-site S-methylcysteine intermediate is C336.

The protein belongs to the radical SAM superfamily. RlmN family. It depends on [4Fe-4S] cluster as a cofactor.

It localises to the cytoplasm. It catalyses the reaction adenosine(2503) in 23S rRNA + 2 reduced [2Fe-2S]-[ferredoxin] + 2 S-adenosyl-L-methionine = 2-methyladenosine(2503) in 23S rRNA + 5'-deoxyadenosine + L-methionine + 2 oxidized [2Fe-2S]-[ferredoxin] + S-adenosyl-L-homocysteine. The catalysed reaction is adenosine(37) in tRNA + 2 reduced [2Fe-2S]-[ferredoxin] + 2 S-adenosyl-L-methionine = 2-methyladenosine(37) in tRNA + 5'-deoxyadenosine + L-methionine + 2 oxidized [2Fe-2S]-[ferredoxin] + S-adenosyl-L-homocysteine. In terms of biological role, specifically methylates position 2 of adenine 2503 in 23S rRNA and position 2 of adenine 37 in tRNAs. The protein is Probable dual-specificity RNA methyltransferase RlmN of Porphyromonas gingivalis (strain ATCC 33277 / DSM 20709 / CIP 103683 / JCM 12257 / NCTC 11834 / 2561).